The following is a 377-amino-acid chain: tRNA-specific 2-thiouridylase MnmA (377 aa).

ATP is bound by residues Gly-8–Ser-15 and Met-34. Residues Asn-94–Asp-96 are interaction with target base in tRNA. The Nucleophile role is filled by Cys-99. Residues Cys-99 and Cys-201 are joined by a disulfide bond. Residue Gly-123 participates in ATP binding. The tract at residues Lys-151 to Gln-153 is interaction with tRNA. Cys-201 (cysteine persulfide intermediate) is an active-site residue. The interval Arg-315 to Tyr-316 is interaction with tRNA.

Belongs to the MnmA/TRMU family.

The protein resides in the cytoplasm. The enzyme catalyses S-sulfanyl-L-cysteinyl-[protein] + uridine(34) in tRNA + AH2 + ATP = 2-thiouridine(34) in tRNA + L-cysteinyl-[protein] + A + AMP + diphosphate + H(+). Functionally, catalyzes the 2-thiolation of uridine at the wobble position (U34) of tRNA, leading to the formation of s(2)U34. This Acinetobacter baumannii (strain AB307-0294) protein is tRNA-specific 2-thiouridylase MnmA.